The following is a 432-amino-acid chain: Enolase (432 aa).

Q167 provides a ligand contact to (2R)-2-phosphoglycerate. Catalysis depends on E209, which acts as the Proton donor. Residues D246, E287, and D314 each contribute to the Mg(2+) site. (2R)-2-phosphoglycerate contacts are provided by K339, R368, S369, and K390. Catalysis depends on K339, which acts as the Proton acceptor.

This sequence belongs to the enolase family. Requires Mg(2+) as cofactor.

Its subcellular location is the cytoplasm. It is found in the secreted. The protein resides in the cell surface. It catalyses the reaction (2R)-2-phosphoglycerate = phosphoenolpyruvate + H2O. Its pathway is carbohydrate degradation; glycolysis; pyruvate from D-glyceraldehyde 3-phosphate: step 4/5. Catalyzes the reversible conversion of 2-phosphoglycerate (2-PG) into phosphoenolpyruvate (PEP). It is essential for the degradation of carbohydrates via glycolysis. The chain is Enolase from Prochlorococcus marinus (strain SARG / CCMP1375 / SS120).